Here is a 205-residue protein sequence, read N- to C-terminus: uncharacterized protein (205 aa).

The region spanning 26-129 (DWHHVSRVAD…VQDADRLDAI (104 aa)) is the HD domain.

This is an uncharacterized protein from Bacillus subtilis (strain 168).